The following is a 280-amino-acid chain: Fructose-1,6-bisphosphatase/inositol-1-monophosphatase (280 aa).

Mg(2+) is bound by residues E73, D94, L96, and D97. Substrate-binding positions include 97-99 (DGT), R195, V200, and R219. Residue D226 participates in Mg(2+) binding.

It belongs to the inositol monophosphatase superfamily. FBPase class 4 family. It depends on Mg(2+) as a cofactor.

The catalysed reaction is beta-D-fructose 1,6-bisphosphate + H2O = beta-D-fructose 6-phosphate + phosphate. It carries out the reaction a myo-inositol phosphate + H2O = myo-inositol + phosphate. Functionally, phosphatase with broad specificity; it can dephosphorylate fructose 1,6-bisphosphate, and both D and L isomers of inositol-1-phosphate (I-1-P). In Methanothermobacter thermautotrophicus (strain ATCC 29096 / DSM 1053 / JCM 10044 / NBRC 100330 / Delta H) (Methanobacterium thermoautotrophicum), this protein is Fructose-1,6-bisphosphatase/inositol-1-monophosphatase (suhB).